Reading from the N-terminus, the 510-residue chain is Probable serine/threonine-protein kinase 2 (510 aa).

The Protein kinase domain occupies 111–364 (YVLNKKIGKG…ALQALGHQWF (254 aa)). ATP contacts are provided by residues 117–125 (IGKGSFSTA) and lysine 140. The active-site Proton acceptor is the aspartate 230. Residues 408-428 (NDDIYNNNNNNNQLDPNKNHK) are disordered.

Belongs to the protein kinase superfamily. Ser/Thr protein kinase family.

The protein localises to the membrane. The enzyme catalyses L-seryl-[protein] + ATP = O-phospho-L-seryl-[protein] + ADP + H(+). It catalyses the reaction L-threonyl-[protein] + ATP = O-phospho-L-threonyl-[protein] + ADP + H(+). The protein is Probable serine/threonine-protein kinase 2 (PK2) of Plasmodium falciparum (isolate K1 / Thailand).